The following is a 360-amino-acid chain: NAD(P)H-quinone oxidoreductase subunit 1, chloroplastic (360 aa).

8 consecutive transmembrane segments (helical) span residues 30–50 (FLPI…LVWL), 98–118 (FSIG…VIPF), 127–147 (FNIG…GLLM), 165–185 (AAQS…ISLL), 203–223 (FWGW…ISSL), 253–273 (FGLF…FVTV), 297–317 (IFGT…FLFI), and 340–360 (FLLP…VFSL).

It belongs to the complex I subunit 1 family. In terms of assembly, NDH is composed of at least 16 different subunits, 5 of which are encoded in the nucleus.

It localises to the plastid. Its subcellular location is the chloroplast thylakoid membrane. The enzyme catalyses a plastoquinone + NADH + (n+1) H(+)(in) = a plastoquinol + NAD(+) + n H(+)(out). The catalysed reaction is a plastoquinone + NADPH + (n+1) H(+)(in) = a plastoquinol + NADP(+) + n H(+)(out). Its function is as follows. NDH shuttles electrons from NAD(P)H:plastoquinone, via FMN and iron-sulfur (Fe-S) centers, to quinones in the photosynthetic chain and possibly in a chloroplast respiratory chain. The immediate electron acceptor for the enzyme in this species is believed to be plastoquinone. Couples the redox reaction to proton translocation, and thus conserves the redox energy in a proton gradient. The polypeptide is NAD(P)H-quinone oxidoreductase subunit 1, chloroplastic (Aethionema cordifolium (Lebanon stonecress)).